The primary structure comprises 65 residues: Large ribosomal subunit protein bL35 (65 aa).

The span at 1-11 (MPKIKTRRSAA) shows a compositional bias: basic residues. Disordered stretches follow at residues 1 to 24 (MPKI…KFKR) and 41 to 65 (RMRL…MPYA).

The protein belongs to the bacterial ribosomal protein bL35 family.

The protein is Large ribosomal subunit protein bL35 of Nitratidesulfovibrio vulgaris (strain DSM 19637 / Miyazaki F) (Desulfovibrio vulgaris).